The primary structure comprises 628 residues: Modular serine protease (628 aa).

The first 25 residues, 1-25 (MQLISFLSNPLFFCALLLKFRTIFA), serve as a signal peptide directing secretion. 4 consecutive LDL-receptor class A domains span residues 26–64 (ACDSSQFECDNGSCISQYDVCNGEKNCPDGSDETALTCV), 69–107 (HCTKPYFQCTYGACVIGTAGCNGVNECADGSDETRLRCG), 122–163 (NCKE…ELCG), and 166–204 (ECPAYSFKCGTGGCISGSLSCNGENDCYDGSDEAPLLCN). Cystine bridges form between Cys27/Cys39, Cys34/Cys52, Cys46/Cys63, Cys70/Cys82, Cys77/Cys95, Cys89/Cys106, Cys123/Cys135, Cys130/Cys149, Cys143/Cys162, Cys167/Cys179, Cys174/Cys192, and Cys186/Cys203. Residue Asn36 is glycosylated (N-linked (GlcNAc...) asparagine). Residue Asn204 is glycosylated (N-linked (GlcNAc...) asparagine). 2 Sushi domains span residues 222 to 285 (LGCP…KCVK) and 300 to 356 (ALCT…RCEQ). Disulfide bonds link Cys224/Cys270, Cys256/Cys283, Cys302/Cys341, and Cys326/Cys354. Residues 369–621 (SSGGYTINNT…FEDMILNAMN (253 aa)) form the Peptidase S1 domain. Asn376 carries an N-linked (GlcNAc...) asparagine glycan. Cys399 and Cys415 are disulfide-bonded. Catalysis depends on charge relay system residues His414, Asp472, and Ser563. Asn621 carries an N-linked (GlcNAc...) asparagine glycan.

This sequence belongs to the peptidase S1 family. In terms of processing, may be proteolytically cleaved via an autocatalytic mechanism.

It is found in the secreted. Functionally, serine protease that plays a key role in innate immunity by activating the Toll pathway in response to infection with Gram-positive bacteria and fungi. During Gram-positive infection, acts downstream of PGRP-SA and upstream of Grass and Spz, and therefore appears to function in a pathway that links detection of Gram-positive lysine-type peptidoglycans to Toll activation. Functions in a separate pathway to the psh-mediated activation of the Toll pathway. The protein is Modular serine protease of Drosophila melanogaster (Fruit fly).